We begin with the raw amino-acid sequence, 340 residues long: Serpentine receptor class alpha-23 (340 aa).

6 consecutive transmembrane segments (helical) span residues 34-54 (FISTIVLISYCFSWLAIQALW), 114-136 (YFYYLTNYFSTYSVFSLTFDRLI), 150-170 (FIAISLLVLQFLLAILSFYIA), 199-219 (VRTVVMVSCIIVTGFAYYLSV), 250-270 (ILIVLQFSCTMISSFGVNLLL), and 284-304 (VGAFLPGVAYANLCLPLAIYF).

The protein belongs to the nematode receptor-like protein sra family.

It is found in the membrane. The sequence is that of Serpentine receptor class alpha-23 (sra-23) from Caenorhabditis elegans.